A 223-amino-acid chain; its full sequence is Class E basic helix-loop-helix protein 23 (223 aa).

The segment at Pro-32–Pro-93 is disordered. In terms of domain architecture, bHLH spans Ser-98 to Gln-152.

In terms of tissue distribution, expressed in brain and retina.

Its subcellular location is the nucleus. In terms of biological role, may function as transcriptional repressor. May modulate the expression of genes required for the differentiation and/or maintenance of pancreatic and neuronal cell types. May be important for rod bipolar cell maturation. In Mus musculus (Mouse), this protein is Class E basic helix-loop-helix protein 23 (Bhlhe23).